The following is a 3712-amino-acid chain: Laminin subunit alpha (3712 aa).

The signal sequence occupies residues Met1–Ala22. A Laminin N-terminal domain is found at Glu23–Arg272. Asn116 and Asn219 each carry an N-linked (GlcNAc...) asparagine glycan. 43 cysteine pairs are disulfide-bonded: Cys273–Cys282, Cys275–Cys296, Cys298–Cys307, Cys310–Cys330, Cys333–Cys342, Cys335–Cys367, Cys370–Cys379, Cys382–Cys400, Cys403–Cys414, Cys405–Cys421, Cys423–Cys432, Cys435–Cys445, Cys448–Cys460, Cys450–Cys468, Cys470–Cys479, Cys482–Cys492, Cys495–Cys507, Cys497–Cys514, Cys516–Cys525, Cys528–Cys538, Cys541–Cys553, Cys543–Cys560, Cys562–Cys571, Cys574–Cys584, Cys587–Cys599, Cys589–Cys605, Cys607–Cys616, Cys619–Cys629, Cys632–Cys644, Cys634–Cys650, Cys652–Cys661, Cys664–Cys674, Cys677–Cys691, Cys679–Cys700, Cys702–Cys711, Cys714–Cys729, Cys732–Cys746, Cys734–Cys753, Cys755–Cys764, Cys767–Cys782, Cys785–Cys797, Cys787–Cys804, and Cys806–Cys815. 10 Laminin EGF-like domains span residues Cys273–Pro332, Cys333–Pro402, Cys403–Glu447, Cys448–Ala494, Cys495–Tyr540, Cys541–Pro586, Cys587–Pro631, Cys632–Asp676, Cys677–Ile731, and Cys732–Asp784. Residue Asn395 is glycosylated (N-linked (GlcNAc...) asparagine). The N-linked (GlcNAc...) asparagine glycan is linked to Asn453. Residue Asn508 is glycosylated (N-linked (GlcNAc...) asparagine). N-linked (GlcNAc...) asparagine glycosylation occurs at Asn588. A glycan (N-linked (GlcNAc...) asparagine) is linked at Asn722. Residues Cys785 to Cys815 enclose the Laminin EGF-like 11; truncated domain. Residues Thr816–Pro1374 form a domain IV'' region. Residues Asn897 and Asn1352 are each glycosylated (N-linked (GlcNAc...) asparagine). 16 cysteine pairs are disulfide-bonded: Cys1375/Cys1387, Cys1377/Cys1394, Cys1396/Cys1405, Cys1408/Cys1418, Cys1421/Cys1429, Cys1423/Cys1436, Cys1438/Cys1447, Cys1450/Cys1463, Cys1466/Cys1480, Cys1468/Cys1487, Cys1489/Cys1498, Cys1501/Cys1511, Cys1514/Cys1526, Cys1516/Cys1533, Cys1535/Cys1544, and Cys1547/Cys1562. 4 Laminin EGF-like domains span residues Cys1375 to Pro1420, Cys1421 to Glu1465, Cys1466 to Gln1513, and Cys1514 to Thr1564. Asn1484 carries an N-linked (GlcNAc...) asparagine glycan. The 10-residue stretch at Cys1565–Cys1574 folds into the Laminin EGF-like 16; first part domain. Asn1583 and Asn1617 each carry an N-linked (GlcNAc...) asparagine glycan. The region spanning Ser1585–Arg1775 is the Laminin IV type A domain. The Laminin EGF-like 16; second part domain maps to Cys1776–Pro1808. Cystine bridges form between Cys1778–Cys1787, Cys1790–Cys1806, Cys1809–Cys1818, Cys1811–Cys1825, Cys1828–Cys1837, Cys1840–Cys1856, Cys1859–Cys1874, Cys1861–Cys1885, Cys1887–Cys1896, Cys1899–Cys1914, Cys1917–Cys1931, Cys1919–Cys1938, Cys1941–Cys1950, Cys1953–Cys1967, Cys1970–Cys1980, Cys1972–Cys1987, Cys1989–Cys1998, Cys2001–Cys2014, Cys2017–Cys2028, Cys2019–Cys2035, Cys2037–Cys2046, Cys2049–Cys2061, Cys2064–Cys2076, Cys2066–Cys2083, Cys2085–Cys2094, and Cys2097–Cys2109. 6 consecutive Laminin EGF-like domains span residues Cys1809–Ile1858, Cys1859–Pro1916, Cys1917–Ser1969, Cys1970–Ala2016, Cys2017–Pro2063, and Cys2064–Glu2111. An N-linked (GlcNAc...) asparagine glycan is attached at Asn1847. N-linked (GlcNAc...) asparagine glycosylation is present at Asn1943. A glycan (N-linked (GlcNAc...) asparagine) is linked at Asn2024. The domain II and I stretch occupies residues Cys2112–Ile2671. Positions Lys2178 to Ser2249 form a coiled coil. Asn2196, Asn2215, Asn2267, Asn2301, and Asn2323 each carry an N-linked (GlcNAc...) asparagine glycan. Residues Asn2301 to Leu2321 are a coiled coil. A coiled-coil region spans residues Asp2376 to Glu2450. N-linked (GlcNAc...) asparagine glycosylation is found at Asn2482, Asn2524, Asn2538, Asn2569, Asn2699, Asn2720, Asn2890, Asn2938, and Asn3010. Residues Glu2541–Asn2676 are a coiled coil. 3 consecutive Laminin G-like domains span residues Lys2672 to Val2868, Val2876 to Cys3048, and Val3055 to Cys3223. An intrachain disulfide couples Cys3022 to Cys3048. Residue Asn3070 is glycosylated (N-linked (GlcNAc...) asparagine). A disulfide bridge connects residues Cys3196 and Cys3223. A disordered region spans residues Asn3244–Pro3297. Low complexity predominate over residues Ser3265–Pro3297. Laminin G-like domains follow at residues Gly3349 to Cys3528 and Arg3534 to Cys3709. Residue Asn3491 is glycosylated (N-linked (GlcNAc...) asparagine). Cys3505 and Cys3528 are joined by a disulfide. Residue Asn3612 is glycosylated (N-linked (GlcNAc...) asparagine). The cysteines at positions 3682 and 3709 are disulfide-linked.

In terms of assembly, laminin is a complex glycoprotein, consisting of three different polypeptide chains (alpha, beta, gamma), which are bound to each other by disulfide bonds into a cross-shaped molecule comprising one long and three short arms with globules at each end. Newly formed mesoderm and later prominently expressed in hemocytes, which also synthesize collagen IV. Expressed in muscles.

It is found in the secreted. Its subcellular location is the extracellular space. The protein localises to the extracellular matrix. It localises to the basement membrane. The protein resides in the synapse. It is found in the cell projection. Its subcellular location is the axon. The protein localises to the cytoplasmic vesicle. It localises to the secretory vesicle. The protein resides in the synaptic vesicle. Its function is as follows. Binding to cells via a high affinity receptor, laminin is thought to mediate the attachment, migration and organization of cells into tissues during embryonic development by interacting with other extracellular matrix components. Activates presynaptic signaling involving integrin alpha-PS3/beta-nu and Fak to suppress neuromuscular junction (NMJ) growth during larval development and during low crawling activity, but not during higher-crawling conditions. Mediates, together with integrin alpha-PS3/beta-nu, glutamate receptor-modulated NMJ growth. The protein is Laminin subunit alpha (LanA) of Drosophila melanogaster (Fruit fly).